Reading from the N-terminus, the 271-residue chain is L-aspartate dehydrogenase (271 aa).

2 residues coordinate NAD(+): A124 and N192. The active site involves H222.

The protein belongs to the L-aspartate dehydrogenase family.

It carries out the reaction L-aspartate + NADP(+) + H2O = oxaloacetate + NH4(+) + NADPH + H(+). It catalyses the reaction L-aspartate + NAD(+) + H2O = oxaloacetate + NH4(+) + NADH + H(+). It participates in cofactor biosynthesis; NAD(+) biosynthesis; iminoaspartate from L-aspartate (dehydrogenase route): step 1/1. In terms of biological role, specifically catalyzes the NAD or NADP-dependent dehydrogenation of L-aspartate to iminoaspartate. The chain is L-aspartate dehydrogenase from Methanosarcina barkeri (strain Fusaro / DSM 804).